The chain runs to 505 residues: Protein ERGIC-53-like (505 aa).

A signal peptide spans 1–25; sequence MLEIRGLSPSLCLLSLLLVLHGAER. Residues 26–438 lie on the Lumenal side of the membrane; it reads SQPPPRRRFE…SGWLLGSSTC (413 aa). One can recognise an L-type lectin-like domain in the interval 32–254; the sequence is RRFEYKLSFK…DVLSFLTFSL (223 aa). N-linked (GlcNAc...) asparagine glycosylation is present at Asn84. Cys177 and Cys216 are joined by a disulfide. A helical transmembrane segment spans residues 439-459; sequence LHTSIFLFFLLLQTVGFFCYV. Residues 460 to 505 are Cytoplasmic-facing; it reads NFSRQELDKRLQEYLSTGSLSLEPALPITRTIGVLRRQPISPSMQA.

The protein resides in the endoplasmic reticulum-Golgi intermediate compartment membrane. In Mus musculus (Mouse), this protein is Protein ERGIC-53-like (Lman1l).